The following is a 553-amino-acid chain: Protein PNS1 (553 aa).

Residues 1-53 (MFGEGNKPTEPVPAYDAGQDPFQGPNASKNQYQGSAADYNGAPPPPASQPGNQ) form a disordered region. The Cytoplasmic segment spans residues 1–94 (MFGEGNKPTE…EDSKPKWNDW (94 aa)). Positions 25–34 (PNASKNQYQG) are enriched in polar residues. Residues 95–115 (PFTIFFAGCVIAFIVVAAITL) form a helical membrane-spanning segment. Residues 116-142 (RAWSQNSSSQGSGVYDGANTGTLTTNS) are Extracellular-facing. N-linked (GlcNAc...) asparagine glycosylation is present at Asn-121. Residues 143-163 (AIMLAISCIIAFVFSIIGIVL) form a helical membrane-spanning segment. Residues 164–169 (ARMFPK) lie on the Cytoplasmic side of the membrane. The chain crosses the membrane as a helical span at residues 170–190 (FFIIAGILFNIIAGLATAIMY). The Extracellular segment spans residues 191–192 (LS). The helical transmembrane segment at 193-213 (LKYYSAGIVFLVFTAICALFY) threads the bilayer. The Cytoplasmic segment spans residues 214–241 (WRMRHRIPFTVAVLKTVMDVMKSYPQTW). A helical membrane pass occupies residues 242–262 (FVTLIGSIIATAFSILFSAVI). The Extracellular portion of the chain corresponds to 263–287 (VATYMKYDDKANNPGCSTNGGSCSN). Residues 288–308 (AKLIGLLVLVFFCGYYIAEVI) traverse the membrane as a helical segment. The Cytoplasmic segment spans residues 309–349 (RNVIHCTVSGIFGAWYYFSKSDQGMPKWPGFGALKRSLTYS). Residues 350-370 (FGSICFGSLIVTIIETLKAVL) traverse the membrane as a helical segment. At 371–385 (RLAVDGVMGGGGADN) the chain is on the extracellular side. The helical transmembrane segment at 386-406 (GWMQCLALIANWIFSFLEWLA) threads the bilayer. At 407 to 450 (RYFNHYAYVFIALYGKPYLRAAKETWYMLREKGIDALINDNLVN) the chain is on the cytoplasmic side. The helical transmembrane segment at 451-471 (VALSFFTLFTCYITTLFAYLY) threads the bilayer. Residues 472 to 484 (LRYTDPNYNDNNN) are Extracellular-facing. Residues 485–505 (FTPALMAFAFVIAMEICNVIT) traverse the membrane as a helical segment. The Cytoplasmic portion of the chain corresponds to 506 to 553 (ETIRSGTATFFVALGNDPEVFHLSYPERFDEIFRAYPEVLKKLSHQNV).

The protein belongs to the CTL (choline transporter-like) family.

The protein resides in the cell membrane. Its function is as follows. Probably involved in transport through the plasma membrane. The sequence is that of Protein PNS1 (PNS1) from Kluyveromyces lactis (strain ATCC 8585 / CBS 2359 / DSM 70799 / NBRC 1267 / NRRL Y-1140 / WM37) (Yeast).